The chain runs to 208 residues: Exosome complex component CSL4 homolog (208 aa).

Component of the RNA exosome complex. Ubiquitously expressed.

It localises to the nucleus. Its subcellular location is the nucleolus. The protein localises to the nucleoplasm. Non-catalytic component of the RNA exosome complex which has 3'-&gt;5' exoribonuclease activity and participates in a multitude of cellular RNA processing and degradation events. Involved in regulation of antisense ribosomal siRNA production. Involved in response to cold-warm shock. This Caenorhabditis elegans protein is Exosome complex component CSL4 homolog.